The chain runs to 1380 residues: DNA-directed RNA polymerase subunit beta (1380 aa).

Belongs to the RNA polymerase beta chain family. The RNAP catalytic core consists of 2 alpha, 1 beta, 1 beta' and 1 omega subunit. When a sigma factor is associated with the core the holoenzyme is formed, which can initiate transcription.

The catalysed reaction is RNA(n) + a ribonucleoside 5'-triphosphate = RNA(n+1) + diphosphate. Its function is as follows. DNA-dependent RNA polymerase catalyzes the transcription of DNA into RNA using the four ribonucleoside triphosphates as substrates. In Nitrobacter winogradskyi (strain ATCC 25391 / DSM 10237 / CIP 104748 / NCIMB 11846 / Nb-255), this protein is DNA-directed RNA polymerase subunit beta.